The chain runs to 666 residues: Zinc finger MYM-type protein 5 (666 aa).

Glycyl lysine isopeptide (Lys-Gly) (interchain with G-Cter in SUMO2) cross-links involve residues lysine 85, lysine 88, lysine 146, and lysine 163. The tract at residues 87–106 (EKPQGNYSVIPPPSRDLASQ) is disordered. A disordered region spans residues 191 to 212 (SPDSWISQSASFPRNQKQPGVD). Over residues 194-208 (SWISQSASFPRNQKQ) the composition is skewed to polar residues. Residue lysine 222 forms a Glycyl lysine isopeptide (Lys-Gly) (interchain with G-Cter in SUMO2) linkage. 4 MYM-type zinc fingers span residues 262-296 (HLFC…KKAD), 308-348 (QEFC…RHEV), 355-390 (HKLC…KSTG), and 401-428 (KRFC…ASEN). Residues lysine 440, lysine 452, lysine 459, and lysine 549 each participate in a glycyl lysine isopeptide (Lys-Gly) (interchain with G-Cter in SUMO2) cross-link.

As to quaternary structure, interacts (via N-terminal 120 amino acid region) with ETV5 (via C-terminal).

The protein resides in the nucleus. Its function is as follows. Functions as a transcriptional regulator. This is Zinc finger MYM-type protein 5 (ZMYM5) from Macaca fascicularis (Crab-eating macaque).